We begin with the raw amino-acid sequence, 364 residues long: Aminomethyltransferase (364 aa).

Belongs to the GcvT family. As to quaternary structure, the glycine cleavage system is composed of four proteins: P, T, L and H.

It catalyses the reaction N(6)-[(R)-S(8)-aminomethyldihydrolipoyl]-L-lysyl-[protein] + (6S)-5,6,7,8-tetrahydrofolate = N(6)-[(R)-dihydrolipoyl]-L-lysyl-[protein] + (6R)-5,10-methylene-5,6,7,8-tetrahydrofolate + NH4(+). Functionally, the glycine cleavage system catalyzes the degradation of glycine. The chain is Aminomethyltransferase from Salmonella paratyphi B (strain ATCC BAA-1250 / SPB7).